A 209-amino-acid polypeptide reads, in one-letter code: Ribosomal RNA large subunit methyltransferase E (209 aa).

Positions 63, 65, 83, 99, and 124 each coordinate S-adenosyl-L-methionine. Lys164 serves as the catalytic Proton acceptor.

It belongs to the class I-like SAM-binding methyltransferase superfamily. RNA methyltransferase RlmE family.

It is found in the cytoplasm. It catalyses the reaction uridine(2552) in 23S rRNA + S-adenosyl-L-methionine = 2'-O-methyluridine(2552) in 23S rRNA + S-adenosyl-L-homocysteine + H(+). In terms of biological role, specifically methylates the uridine in position 2552 of 23S rRNA at the 2'-O position of the ribose in the fully assembled 50S ribosomal subunit. The polypeptide is Ribosomal RNA large subunit methyltransferase E (Aliivibrio fischeri (strain MJ11) (Vibrio fischeri)).